The sequence spans 244 residues: 5-oxoprolinase subunit A (244 aa).

This sequence belongs to the LamB/PxpA family. As to quaternary structure, forms a complex composed of PxpA, PxpB and PxpC.

It catalyses the reaction 5-oxo-L-proline + ATP + 2 H2O = L-glutamate + ADP + phosphate + H(+). Functionally, catalyzes the cleavage of 5-oxoproline to form L-glutamate coupled to the hydrolysis of ATP to ADP and inorganic phosphate. This chain is 5-oxoprolinase subunit A, found in Escherichia fergusonii (strain ATCC 35469 / DSM 13698 / CCUG 18766 / IAM 14443 / JCM 21226 / LMG 7866 / NBRC 102419 / NCTC 12128 / CDC 0568-73).